The chain runs to 317 residues: Signal recognition particle receptor FtsY (317 aa).

GTP is bound by residues 117 to 124, 199 to 203, and 263 to 266; these read GVNGVGKT, DTAGR, and TKLD.

The protein belongs to the GTP-binding SRP family. FtsY subfamily. As to quaternary structure, part of the signal recognition particle protein translocation system, which is composed of SRP and FtsY.

The protein localises to the cell membrane. It is found in the cytoplasm. It carries out the reaction GTP + H2O = GDP + phosphate + H(+). Involved in targeting and insertion of nascent membrane proteins into the cytoplasmic membrane. Acts as a receptor for the complex formed by the signal recognition particle (SRP) and the ribosome-nascent chain (RNC). This Deinococcus radiodurans (strain ATCC 13939 / DSM 20539 / JCM 16871 / CCUG 27074 / LMG 4051 / NBRC 15346 / NCIMB 9279 / VKM B-1422 / R1) protein is Signal recognition particle receptor FtsY.